We begin with the raw amino-acid sequence, 123 residues long: UPF0102 protein Csal_2201 (123 aa).

The protein belongs to the UPF0102 family.

The chain is UPF0102 protein Csal_2201 from Chromohalobacter salexigens (strain ATCC BAA-138 / DSM 3043 / CIP 106854 / NCIMB 13768 / 1H11).